The following is a 271-amino-acid chain: Hachiman protein HamA (271 aa).

In terms of biological role, component of antiviral defense system Hachiman, composed of HamA and HamB. Expression of Hachiman in B.subtilis (strain BEST7003) confers resistance to phages phi105, phi29, phi3T, rho14, SBSphiJ, SpBeta and SPR. The polypeptide is Hachiman protein HamA (Bacillus cereus).